The following is a 317-amino-acid chain: Transaldolase (317 aa).

The active-site Schiff-base intermediate with substrate is lysine 126.

Belongs to the transaldolase family. Type 1 subfamily. As to quaternary structure, homodimer.

It is found in the cytoplasm. It carries out the reaction D-sedoheptulose 7-phosphate + D-glyceraldehyde 3-phosphate = D-erythrose 4-phosphate + beta-D-fructose 6-phosphate. The protein operates within carbohydrate degradation; pentose phosphate pathway; D-glyceraldehyde 3-phosphate and beta-D-fructose 6-phosphate from D-ribose 5-phosphate and D-xylulose 5-phosphate (non-oxidative stage): step 2/3. In terms of biological role, transaldolase is important for the balance of metabolites in the pentose-phosphate pathway. The protein is Transaldolase of Burkholderia ambifaria (strain ATCC BAA-244 / DSM 16087 / CCUG 44356 / LMG 19182 / AMMD) (Burkholderia cepacia (strain AMMD)).